Here is a 128-residue protein sequence, read N- to C-terminus: Conopressin-conophysin (128 aa).

Residues 1 to 27 (MTRSAMQMGRLTLVLCLLLLLLLTTQA) form the signal peptide. Residues cysteine 28 and cysteine 33 are joined by a disulfide bond. Position 36 is a glycine amide (glycine 36). The propeptide occupies 37–44 (GKRDVDER). 7 disulfides stabilise this stretch: cysteine 50–cysteine 90, cysteine 53–cysteine 64, cysteine 58–cysteine 80, cysteine 65–cysteine 70, cysteine 97–cysteine 115, cysteine 109–cysteine 127, and cysteine 116–cysteine 121.

It belongs to the vasopressin/oxytocin family. Expressed by the venom gland.

Its subcellular location is the secreted. In terms of biological role, targets vasopressin-oxytocin related receptors. Is more active on fish receptors than on their human counterparts, supporting an evolved role of this conopressin in the envenomation process. Acts as an agonist on zebrafish vasopressin receptors V1a1R (EC(50)=10.6 nM), V1a2R (EC(50)=44.06 nM, partial agonist), V2R (EC(50)=299.2 nM) and oxytocin receptor (EC(50)=353.73 nM, partial agonist). Shows a weaker activity on human receptors AVPR1B (EC(50)=51.92 nM), AVPR1A (EC(50)=123.78 nM), AVPR2 (EC(50)=299.2 nM) and oxytocin (OXTR) receptor (EC(50)=455.66 nM, partial agonist). In vivo, exhibits grooming and scratching behavior in mice, following intracerebral injection. The protein is Conopressin-conophysin of Conus geographus (Geography cone).